The sequence spans 142 residues: Translation initiation factor 2 subunit beta (142 aa).

The protein belongs to the eIF-2-beta/eIF-5 family. As to quaternary structure, heterotrimer composed of an alpha, a beta and a gamma chain.

In terms of biological role, eIF-2 functions in the early steps of protein synthesis by forming a ternary complex with GTP and initiator tRNA. This Thermococcus gammatolerans (strain DSM 15229 / JCM 11827 / EJ3) protein is Translation initiation factor 2 subunit beta.